A 214-amino-acid polypeptide reads, in one-letter code: MGRRPARCYRYIKNKPYPKSRFCRGVPDAKIRIFDLGNKRANVDTFPACVHMMSNEREHLSSEALEAARICANKYMVKNCGKDGFHLRVRKHPFHVTRINKMLSCAGADRLQTGMRGAYGKPQGLVARVDIGDILFSMRIKEGNVKHAIEAFRRAKFKFPGRQIIVSSRKWGFTKWDREDYERMRAEGRLRSDGVGVQLQREHGPLTKWIENPI.

The protein belongs to the universal ribosomal protein uL16 family. Component of the large ribosomal subunit. Mature ribosomes consist of a small (40S) and a large (60S) subunit. The 40S subunit contains about 33 different proteins and 1 molecule of RNA (18S). The 60S subunit contains about 49 different proteins and 3 molecules of RNA (28S, 5.8S and 5S).

This chain is Large ribosomal subunit protein uL16 (rpl-10L), found in Caenorhabditis elegans.